The chain runs to 132 residues: Transmembrane protein 170B (132 aa).

At 1–37 the chain is on the extracellular side; that stretch reads MKAEGGDHSMINLSVQQVLSLWAHGTVLRNLTEMWYW. A glycan (N-linked (GlcNAc...) asparagine) is linked at Asn-12. The helical transmembrane segment at 38 to 58 threads the bilayer; it reads IFLWALFSSLFVHGAAGVLMF. Topologically, residues 59–68 are cytoplasmic; that stretch reads VMLQRHRQGR. The helical transmembrane segment at 69 to 89 threads the bilayer; the sequence is VISVIAVSIGFLASVTGAMIT. Residues 90–104 lie on the Extracellular side of the membrane; sequence SAAVAGIYRVAGKNM. Residues 105 to 125 traverse the membrane as a helical segment; sequence APLEALVWGVGQTVLTLIISF. Over 126–132 the chain is Cytoplasmic; it reads SRILATL.

This sequence belongs to the TMEM170 family. In terms of assembly, interacts with CTNNB1. As to expression, expressed in normal breast tissues. Down-regulated in breast cancer cells (at protein level).

Its subcellular location is the cell membrane. In terms of biological role, negatively regulates the canonical Wnt signaling in breast cancer cells. Exerts an inhibitory effect on breast cancer growth by inhibiting CTNNB1 stabilization and nucleus translocation, which reduces the activity of Wnt targets. The polypeptide is Transmembrane protein 170B (TMEM170B) (Homo sapiens (Human)).